The chain runs to 1238 residues: uncharacterized protein (1238 aa).

7 disordered regions span residues 22 to 83 (LQSA…QEHL), 96 to 150 (SSRQ…IASP), 169 to 250 (FEPD…HQML), 264 to 694 (QLNS…AAMV), 739 to 915 (TKAA…SVPE), 936 to 955 (THSA…APHE), and 1057 to 1089 (PKIS…QCSS). Residues 35-49 (QPPNQQPHQTQQQQQ) show a composition bias toward low complexity. The segment covering 58–72 (PSIQNLTTNATPTST) has biased composition (polar residues). The segment covering 73 to 83 (QLQQQQQQEHL) has biased composition (low complexity). Residues 96–110 (SSRQNQGAPSGNLSN) are compositionally biased toward polar residues. Positions 125-145 (SVSGNTNHTGSNSSSNSGSNN) are enriched in low complexity. Over residues 188–204 (SASSASKLPTHNVQQQH) the composition is skewed to polar residues. 3 stretches are compositionally biased toward low complexity: residues 272–287 (SYQH…QSHP), 309–334 (PLLT…SSQH), and 393–406 (SNEE…NSSN). Residues 433 to 450 (SKPQHPQQAANLNNSCSP) are compositionally biased toward polar residues. S453 is subject to Phosphoserine. Polar residues predominate over residues 463–472 (PFSTQKQSQT). Residues 523–536 (TEQHRMQQDDEPPK) are compositionally biased toward basic and acidic residues. 2 stretches are compositionally biased toward low complexity: residues 549 to 570 (QSNS…SQSS) and 632 to 641 (TTAAVAAPPA). Residue T642 is modified to Phosphothreonine. Over residues 678–688 (ERISSPEKPAE) the composition is skewed to basic and acidic residues. Phosphoserine occurs at positions 682, 749, and 753. Positions 755–764 (IPQSRSTSTP) are enriched in polar residues. 2 positions are modified to phosphoserine: S793 and S799. Low complexity predominate over residues 832-860 (STSAAAAAALAARQLSEAASATKSKPAAG). Residues 861-874 (AKKKNAGVKGKKGS) are compositionally biased toward basic residues. Residues 937-947 (HSAEDVNEKQT) show a composition bias toward basic and acidic residues. Residues 1071-1089 (DSSISYSDDPNESRSQCSS) are compositionally biased toward polar residues. A C2HC pre-PHD-type; degenerate zinc finger spans residues 1089 to 1131 (SVDLLDCSTESKFVETFRGMGKTSENGFEVWLHEDCAVWSNDI). S1099 is modified (phosphoserine). The segment at 1151–1199 (YQCVLCQQTGASICCFQRCCKAAAHVPCGRSANWSLSEEDRKVYCHLHR) adopts a PHD-type zinc-finger fold.

This is an uncharacterized protein from Drosophila melanogaster (Fruit fly).